The following is a 115-amino-acid chain: uncharacterized protein (115 aa).

Transmembrane regions (helical) follow at residues 10–30, 47–67, and 77–97; these read IAIL…SFWL, ASGI…ATVA, and VHFF…AIIV.

The protein localises to the cell membrane. This is an uncharacterized protein from Mycoplasma genitalium (strain ATCC 33530 / DSM 19775 / NCTC 10195 / G37) (Mycoplasmoides genitalium).